The chain runs to 122 residues: U1 small nuclear ribonucleoprotein C (122 aa).

A Matrin-type zinc finger spans residues 4-36; sequence YFCDYCDTYLTHDSPSVRKTHCSGRKHKDNVKM.

The protein belongs to the U1 small nuclear ribonucleoprotein C family. As to quaternary structure, U1 snRNP is composed of the 7 core Sm proteins B/B', D1, D2, D3, E, F and G that assemble in a heptameric protein ring on the Sm site of the small nuclear RNA to form the core snRNP, and at least 3 U1 snRNP-specific proteins U1-70K, U1-A and U1-C. U1-C interacts with U1 snRNA and the 5' splice-site region of the pre-mRNA.

Its subcellular location is the nucleus. Component of the spliceosomal U1 snRNP, which is essential for recognition of the pre-mRNA 5' splice-site and the subsequent assembly of the spliceosome. U1-C is directly involved in initial 5' splice-site recognition for both constitutive and regulated alternative splicing. The interaction with the 5' splice-site seems to precede base-pairing between the pre-mRNA and the U1 snRNA. Stimulates commitment or early (E) complex formation by stabilizing the base pairing of the 5' end of the U1 snRNA and the 5' splice-site region. The protein is U1 small nuclear ribonucleoprotein C of Ciona intestinalis (Transparent sea squirt).